The chain runs to 323 residues: Glutathione synthetase (323 aa).

The ATP-grasp domain maps to 133 to 317 (KMYALQFQSV…IGDQTIAALE (185 aa)). 159–215 (LDELRAAVLKPLGGKAGEGILFLDPGDRNFNSLVEISTQQGQLPVMVQQYLPEAKDG) contributes to the ATP binding site. Mg(2+)-binding residues include Glu-288 and Asn-290.

The protein belongs to the prokaryotic GSH synthase family. The cofactor is Mg(2+). Mn(2+) is required as a cofactor.

The enzyme catalyses gamma-L-glutamyl-L-cysteine + glycine + ATP = glutathione + ADP + phosphate + H(+). The protein operates within sulfur metabolism; glutathione biosynthesis; glutathione from L-cysteine and L-glutamate: step 2/2. This is Glutathione synthetase from Synechococcus elongatus (strain ATCC 33912 / PCC 7942 / FACHB-805) (Anacystis nidulans R2).